A 292-amino-acid chain; its full sequence is Sulfhydrogenase 1 subunit gamma (292 aa).

Residues 15 to 115 form the FAD-binding FR-type domain; sequence YALHRVKVLK…RGPYGNGFPV (101 aa). Residues cysteine 253, cysteine 258, cysteine 261, and cysteine 273 each contribute to the [2Fe-2S] cluster site.

As to quaternary structure, heterotetramer of alpha, beta, gamma and delta subunits. The nickel-containing alpha and delta subunits constitute the hydrogenase activity. The beta and gamma subunits (flavin-containing dimer) constitute the sulfur reductase activity. FAD serves as cofactor. It depends on [2Fe-2S] cluster as a cofactor.

Its subcellular location is the cytoplasm. The enzyme catalyses n sulfur + H2 = (n-1) sulfur + hydrogen sulfide + H(+). With respect to regulation, stimulated by rubredoxin at pH 7.6 but not ferredoxin. Functionally, part of a bifunctional enzyme complex that functions as an NADPH-dependent hydrogen-evolving hydrogenase with sulfur reducing activity. May play a role in hydrogen cycling during fermentative growth. Activity not exhibited with NAD. The beta and gamma subunits form the sulfur reducing component that catalyzes the cytoplasmic production of hydrogen sulfide in the presence of elemental sulfur. Not active in the presence of sodium sulfate, sodium sulfite, sodium thiosulfate or cysteine. This is Sulfhydrogenase 1 subunit gamma from Pyrococcus furiosus (strain ATCC 43587 / DSM 3638 / JCM 8422 / Vc1).